Reading from the N-terminus, the 317-residue chain is uncharacterized protein (317 aa).

The HTH lysR-type domain maps to 29–86 (IDLNLLTIFEAVYVHKGIVNAAKVLNLTPSAISQSIQKLRVIFPDPLFIRKGQGVTPT). The segment at residues 46-65 (IVNAAKVLNLTPSAISQSIQ) is a DNA-binding region (H-T-H motif).

It belongs to the LysR transcriptional regulatory family.

This is an uncharacterized protein from Escherichia coli (strain K12).